The following is a 67-amino-acid chain: Small ribosomal subunit protein bS21 (67 aa).

The protein belongs to the bacterial ribosomal protein bS21 family.

The polypeptide is Small ribosomal subunit protein bS21 (Oleidesulfovibrio alaskensis (strain ATCC BAA-1058 / DSM 17464 / G20) (Desulfovibrio alaskensis)).